A 276-amino-acid chain; its full sequence is Halorhodopsin (276 aa).

Positions 1 to 20 (MTAASTTATTVLQATQSDVL) are excised as a propeptide. Residue Q21 is modified to Pyrrolidone carboxylic acid. Transmembrane regions (helical) follow at residues 31–51 (SSIW…VAMG), 61–81 (LIWV…AGLA), 109–129 (YLTW…LADT), 134–154 (LFTA…AALI), 162–182 (WVFY…LLVQ), 195–215 (IFGT…ILWA), and 220–240 (GVAL…DILA). Position 241 is an N6-(retinylidene)lysine (K241).

Belongs to the archaeal/bacterial/fungal opsin family. Post-translationally, the covalent binding of retinal to the apoprotein, bacterioopsin, generates bacteriorhodopsin.

It is found in the membrane. Its function is as follows. Light-driven chloride pump. This Haloarcula marismortui (strain ATCC 43049 / DSM 3752 / JCM 8966 / VKM B-1809) (Halobacterium marismortui) protein is Halorhodopsin (hop).